Consider the following 331-residue polypeptide: Phosphoribosylformylglycinamidine cyclo-ligase (331 aa).

It belongs to the AIR synthase family.

It is found in the cytoplasm. It catalyses the reaction 2-formamido-N(1)-(5-O-phospho-beta-D-ribosyl)acetamidine + ATP = 5-amino-1-(5-phospho-beta-D-ribosyl)imidazole + ADP + phosphate + H(+). It functions in the pathway purine metabolism; IMP biosynthesis via de novo pathway; 5-amino-1-(5-phospho-D-ribosyl)imidazole from N(2)-formyl-N(1)-(5-phospho-D-ribosyl)glycinamide: step 2/2. This Clostridium novyi (strain NT) protein is Phosphoribosylformylglycinamidine cyclo-ligase.